Here is a 317-residue protein sequence, read N- to C-terminus: tRNA(Met) cytidine acetate ligase (317 aa).

ATP contacts are provided by residues 6 to 19 (IAEY…HIYQ), G100, N157, and R182.

This sequence belongs to the TmcAL family.

The protein localises to the cytoplasm. It carries out the reaction cytidine(34) in elongator tRNA(Met) + acetate + ATP = N(4)-acetylcytidine(34) in elongator tRNA(Met) + AMP + diphosphate. Catalyzes the formation of N(4)-acetylcytidine (ac(4)C) at the wobble position of elongator tRNA(Met), using acetate and ATP as substrates. First activates an acetate ion to form acetyladenylate (Ac-AMP) and then transfers the acetyl group to tRNA to form ac(4)C34. The chain is tRNA(Met) cytidine acetate ligase from Mesomycoplasma hyopneumoniae (strain 232) (Mycoplasma hyopneumoniae).